The chain runs to 173 residues: DELTA-actitoxin-Oor1b (173 aa).

Positions 6–25 (GAALGFNVHQTVLKALGQVS) are N-terminal region. Positions 49, 82, 100, 102, 128, and 133 each coordinate phosphocholine. The tract at residues 100–115 (SVPFDYNLYSNWWDVK) is trp-rich region, which is important for the binding to lipid membrane.

Belongs to the actinoporin family. Sea anemone subfamily. Octamer or nonamer in membranes. Monomer in the soluble state.

Its subcellular location is the secreted. The protein localises to the nematocyst. It localises to the target cell membrane. In terms of biological role, pore-forming protein that forms cations-selective hydrophilic pores of around 1 nm and causes cardiac stimulation and cytolysis. Pore formation is a multi-step process that involves specific recognition of membrane sphingomyelin (but neither cholesterol nor phosphatidylcholine) using aromatic rich region and adjacent phosphocholine (POC) binding site, firm binding to the membrane (mainly driven by hydrophobic interactions) accompanied by the transfer of the N-terminal region to the lipid-water interface and finally pore formation after oligomerization of monomers. Cytolytic effects include red blood cells hemolysis, platelet aggregation and lysis, cytotoxic and cytostatic effects on fibroblasts. Lethality in mammals has been ascribed to severe vasospasm of coronary vessels, cardiac arrhythmia, and inotropic effects. This chain is DELTA-actitoxin-Oor1b, found in Oulactis orientalis (Japan anemone).